The chain runs to 148 residues: Hemoglobin subunit beta (148 aa).

Positions 3–148 (DWTDAERSAI…VVSALGRQYH (146 aa)) constitute a Globin domain. Residues His-64 and His-93 each contribute to the heme b site.

It belongs to the globin family. As to quaternary structure, heterotetramer of two alpha chains and two beta chains. In terms of tissue distribution, red blood cells.

Involved in oxygen transport from gills to the various peripheral tissues. The sequence is that of Hemoglobin subunit beta (hbb) from Oncorhynchus nerka (Sockeye salmon).